Consider the following 185-residue polypeptide: C-type lectin domain family 5 member A (185 aa).

Topologically, residues 1 to 4 are cytoplasmic; that stretch reads MNWH. A helical; Signal-anchor for type II membrane protein membrane pass occupies residues 5–27; that stretch reads MIISGLIVVVLKIVGMTFFLLYF. The Extracellular segment spans residues 28 to 185; sequence PQIFGEHNVS…YRSICEKSAQ (158 aa). Residues Asn-35 and Asn-55 are each glycosylated (N-linked (GlcNAc...) asparagine). A disulfide bond links Cys-68 and Cys-79. One can recognise a C-type lectin domain in the interval 75-181; sequence HQGRCFFLST…CDVNYRSICE (107 aa). 4 N-linked (GlcNAc...) asparagine glycosylation sites follow: Asn-90, Asn-117, Asn-141, and Asn-146. 2 cysteine pairs are disulfide-bonded: Cys-96–Cys-180 and Cys-158–Cys-172.

In terms of assembly, monomer. Homodimer. The majority of CLEC5A is expressed as a monomeric form on macrophages. Interacts with TYROBP/DAP12. The interaction with TYROBP is required for CLEC5 cell surface expression. Interacts with HCST/DAP10. Forms a CLEC5A/TYROBP/HCST trimolecular complex depending almost solely on TYROBP. Post-translationally, N-glycosylated. Contains sialic acid residues. In terms of tissue distribution, constitutively expressed in monocytes and macrophages.

It is found in the cell membrane. Its function is as follows. Functions as a positive regulator of osteoclastogenesis. Cell surface receptor that signals via TYROBP. Regulates inflammatory responses. The polypeptide is C-type lectin domain family 5 member A (CLEC5A) (Sus scrofa (Pig)).